The chain runs to 876 residues: Alanine--tRNA ligase (876 aa).

The Zn(2+) site is built by His-568, His-572, Cys-669, and His-673.

Belongs to the class-II aminoacyl-tRNA synthetase family. The cofactor is Zn(2+).

It localises to the cytoplasm. It carries out the reaction tRNA(Ala) + L-alanine + ATP = L-alanyl-tRNA(Ala) + AMP + diphosphate. Functionally, catalyzes the attachment of alanine to tRNA(Ala) in a two-step reaction: alanine is first activated by ATP to form Ala-AMP and then transferred to the acceptor end of tRNA(Ala). Also edits incorrectly charged Ser-tRNA(Ala) and Gly-tRNA(Ala) via its editing domain. The protein is Alanine--tRNA ligase of Sulfurihydrogenibium sp. (strain YO3AOP1).